The primary structure comprises 290 residues: Probable ATP-dependent kinase TDA10 (290 aa).

Position 38 to 45 (38 to 45 (GPQGSGKS)) interacts with ATP.

The protein belongs to the GLYK kinase family.

It is found in the cytoplasm. The protein resides in the nucleus. ATP-dependent kinase whose specificity is not yet known. This Saccharomyces cerevisiae (strain ATCC 204508 / S288c) (Baker's yeast) protein is Probable ATP-dependent kinase TDA10 (TDA10).